The primary structure comprises 705 residues: Fatty acid oxidation complex subunit alpha (705 aa).

The segment at 1–190 is enoyl-CoA hydratase; that stretch reads MSEQKAFNLK…KLGVVDACVP (190 aa). The segment at 308–705 is 3-hydroxyacyl-CoA dehydrogenase; the sequence is SKVGMVGVLG…AGEGRRFYDN (398 aa).

It in the N-terminal section; belongs to the enoyl-CoA hydratase/isomerase family. The protein in the central section; belongs to the 3-hydroxyacyl-CoA dehydrogenase family. In terms of assembly, heterotetramer of two alpha chains (FadJ) and two beta chains (FadI).

It is found in the cytoplasm. It carries out the reaction a (3S)-3-hydroxyacyl-CoA = a (2E)-enoyl-CoA + H2O. It catalyses the reaction a 4-saturated-(3S)-3-hydroxyacyl-CoA = a (3E)-enoyl-CoA + H2O. The enzyme catalyses a (3S)-3-hydroxyacyl-CoA + NAD(+) = a 3-oxoacyl-CoA + NADH + H(+). The catalysed reaction is (3S)-3-hydroxybutanoyl-CoA = (3R)-3-hydroxybutanoyl-CoA. Its pathway is lipid metabolism; fatty acid beta-oxidation. Its function is as follows. Catalyzes the formation of a hydroxyacyl-CoA by addition of water on enoyl-CoA. Also exhibits 3-hydroxyacyl-CoA epimerase and 3-hydroxyacyl-CoA dehydrogenase activities. This Vibrio vulnificus (strain CMCP6) protein is Fatty acid oxidation complex subunit alpha.